Here is a 267-residue protein sequence, read N- to C-terminus: Acetyl-coenzyme A carboxylase carboxyl transferase subunit beta 1 (267 aa).

One can recognise a CoA carboxyltransferase N-terminal domain in the interval 9 to 267; the sequence is TWQACPKCGR…NYGIGRSAHG (259 aa). Zn(2+)-binding residues include Cys-13, Cys-16, Cys-31, and Cys-34. The C4-type zinc-finger motif lies at 13–34; sequence CPKCGRHVHQRQWGTYQQCPYC.

Belongs to the AccD/PCCB family. As to quaternary structure, acetyl-CoA carboxylase is a heterohexamer composed of biotin carboxyl carrier protein (AccB), biotin carboxylase (AccC) and two subunits each of ACCase subunit alpha (AccA) and ACCase subunit beta (AccD). Zn(2+) serves as cofactor.

It localises to the cytoplasm. The enzyme catalyses N(6)-carboxybiotinyl-L-lysyl-[protein] + acetyl-CoA = N(6)-biotinyl-L-lysyl-[protein] + malonyl-CoA. Its pathway is lipid metabolism; malonyl-CoA biosynthesis; malonyl-CoA from acetyl-CoA: step 1/1. Component of the acetyl coenzyme A carboxylase (ACC) complex. Biotin carboxylase (BC) catalyzes the carboxylation of biotin on its carrier protein (BCCP) and then the CO(2) group is transferred by the transcarboxylase to acetyl-CoA to form malonyl-CoA. The sequence is that of Acetyl-coenzyme A carboxylase carboxyl transferase subunit beta 1 from Lactiplantibacillus plantarum (strain ATCC BAA-793 / NCIMB 8826 / WCFS1) (Lactobacillus plantarum).